The primary structure comprises 289 residues: Inorganic pyrophosphatase (289 aa).

Ser-2 is subject to N-acetylserine. At Lys-57 the chain carries N6-acetyllysine. Positions 116, 121, and 153 each coordinate Mg(2+). Position 228 is an N6-acetyllysine (Lys-228). Ser-250 is subject to Phosphoserine.

This sequence belongs to the PPase family. Homodimer. Mg(2+) is required as a cofactor.

Its subcellular location is the cytoplasm. The catalysed reaction is diphosphate + H2O = 2 phosphate + H(+). In Macaca fascicularis (Crab-eating macaque), this protein is Inorganic pyrophosphatase (PPA1).